A 547-amino-acid polypeptide reads, in one-letter code: Serine/threonine-protein kinase RIO2 (547 aa).

The 177-residue stretch at 97–273 (VGNQMGVGKE…RDVKCIREFF (177 aa)) folds into the Protein kinase domain. Residue K123 coordinates ATP. The active-site Proton acceptor is D228. Phosphoserine occurs at positions 332, 337, 350, 362, 385, and 390. Residues 352 to 385 (LEKEADPADESGGSWCCSSTDSKQIKDGGLPEES) are disordered. The short motif at 399–408 (AVEEMERQVL) is the Nuclear export signal element. Residues 404 to 445 (ERQVLPHRSVTEFSEESRRTENDGQPGQRSPAGSEDCDDEPP) are disordered. Residues S412, S417, S433, S437, and S543 each carry the phosphoserine modification.

Belongs to the protein kinase superfamily. RIO-type Ser/Thr kinase family. In terms of assembly, associated with late 40S pre-ribosomal particles. Interacts with PLK1 (via its N-terminus). The cofactor is Mg(2+). Post-translationally, autophosphorylated (in vitro). Phosphorylation affects the timing of the metaphase-anaphase transition.

The protein localises to the cytoplasm. The catalysed reaction is L-seryl-[protein] + ATP = O-phospho-L-seryl-[protein] + ADP + H(+). The enzyme catalyses L-threonyl-[protein] + ATP = O-phospho-L-threonyl-[protein] + ADP + H(+). Serine/threonine-protein kinase involved in the final steps of cytoplasmic maturation of the 40S ribosomal subunit. Involved in export of the 40S pre-ribosome particles (pre-40S) from the nucleus to the cytoplasm. Its kinase activity is required for the release of NOB1, PNO1 and LTV1 from the late pre-40S and the processing of 18S-E pre-rRNA to the mature 18S rRNA. May regulate the timing of the metaphase-anaphase transition during mitotic progression, and its phosphorylation, may regulate this function. The sequence is that of Serine/threonine-protein kinase RIO2 (Riok2) from Mus musculus (Mouse).